The primary structure comprises 267 residues: Zein-alpha Z4 (267 aa).

A signal peptide spans 1-21 (MAAKIFCLIMLLGLSASAATA).

It belongs to the zein family.

In terms of biological role, zeins are major seed storage proteins. This Zea mays (Maize) protein is Zein-alpha Z4.